The following is a 263-amino-acid chain: MVSWIICKAVVLVFGMLYPAYFSYKAVRTKNVKEYVRWMMYWIVFALYTVTEAIADLTLSWFPLYYELKIAFVVWLLSPYTRGASLLYRKFLHPLLSSKEKEIDDYIVQAKEKGYETMVHFGKQGLNLAANAAVTAAVKGQGAITERLRSFSMHDLTAVQGDETSENRPFATFPDGQKKARASVSDSSGFGSLRKDSGDDNTDEDVEVNSEDEVYTQKGLRRSQSMRSVKVIKGRKEIRYASLKHKPKKRPQLYFREDTAHHL.

The next 2 helical transmembrane spans lie at 2-22 (VSWI…PAYF) and 35-55 (YVRW…EAIA). 2 disordered regions span residues 161 to 228 (GDET…SMRS) and 240 to 263 (YASL…AHHL). The span at 199–214 (DDNTDEDVEVNSEDEV) shows a compositional bias: acidic residues. Residues 242–251 (SLKHKPKKRP) are compositionally biased toward basic residues.

It belongs to the DP1 family.

The protein localises to the endoplasmic reticulum membrane. Its function is as follows. Microtubule-binding protein required to ensure proper cell division and nuclear envelope reassembly by sequestering the endoplasmic reticulum away from chromosomes during mitosis. Probably acts by clearing the endoplasmic reticulum membrane from metaphase chromosomes. This is Receptor expression-enhancing protein 3-A (reep3-a) from Xenopus laevis (African clawed frog).